The following is a 291-amino-acid chain: Beta-lactamase CTX-M-6 (291 aa).

A signal peptide spans 1–28; the sequence is MMTQSIRRSMLTVMATLPLLFSSATLHA. S73 acts as the Acyl-ester intermediate in catalysis. Substrate is bound at residue 237–239; that stretch reads KTG.

The protein belongs to the class-A beta-lactamase family.

It carries out the reaction a beta-lactam + H2O = a substituted beta-amino acid. Its function is as follows. Has cefotaxime-hydrolyzing activity. The sequence is that of Beta-lactamase CTX-M-6 (bla) from Salmonella typhimurium.